We begin with the raw amino-acid sequence, 209 residues long: Ribosomal RNA large subunit methyltransferase E (209 aa).

S-adenosyl-L-methionine contacts are provided by glycine 63, tryptophan 65, aspartate 83, aspartate 99, and aspartate 124. Residue lysine 164 is the Proton acceptor of the active site.

Belongs to the class I-like SAM-binding methyltransferase superfamily. RNA methyltransferase RlmE family.

Its subcellular location is the cytoplasm. The catalysed reaction is uridine(2552) in 23S rRNA + S-adenosyl-L-methionine = 2'-O-methyluridine(2552) in 23S rRNA + S-adenosyl-L-homocysteine + H(+). In terms of biological role, specifically methylates the uridine in position 2552 of 23S rRNA at the 2'-O position of the ribose in the fully assembled 50S ribosomal subunit. This chain is Ribosomal RNA large subunit methyltransferase E, found in Shewanella sp. (strain MR-7).